The sequence spans 221 residues: uncharacterized protein (221 aa).

Its subcellular location is the mitochondrion. This is an uncharacterized protein from Paramecium tetraurelia.